The sequence spans 311 residues: 4-hydroxy-3-methylbut-2-enyl diphosphate reductase (311 aa).

C12 is a [4Fe-4S] cluster binding site. Residues H41 and H74 each coordinate (2E)-4-hydroxy-3-methylbut-2-enyl diphosphate. Dimethylallyl diphosphate contacts are provided by H41 and H74. Residues H41 and H74 each contribute to the isopentenyl diphosphate site. C96 serves as a coordination point for [4Fe-4S] cluster. H124 is a binding site for (2E)-4-hydroxy-3-methylbut-2-enyl diphosphate. H124 is a dimethylallyl diphosphate binding site. H124 is an isopentenyl diphosphate binding site. Residue E126 is the Proton donor of the active site. T168 lines the (2E)-4-hydroxy-3-methylbut-2-enyl diphosphate pocket. C198 serves as a coordination point for [4Fe-4S] cluster. Residues S226, S227, N228, and S270 each contribute to the (2E)-4-hydroxy-3-methylbut-2-enyl diphosphate site. S226, S227, N228, and S270 together coordinate dimethylallyl diphosphate. Isopentenyl diphosphate contacts are provided by S226, S227, N228, and S270.

It belongs to the IspH family. It depends on [4Fe-4S] cluster as a cofactor.

The catalysed reaction is isopentenyl diphosphate + 2 oxidized [2Fe-2S]-[ferredoxin] + H2O = (2E)-4-hydroxy-3-methylbut-2-enyl diphosphate + 2 reduced [2Fe-2S]-[ferredoxin] + 2 H(+). It catalyses the reaction dimethylallyl diphosphate + 2 oxidized [2Fe-2S]-[ferredoxin] + H2O = (2E)-4-hydroxy-3-methylbut-2-enyl diphosphate + 2 reduced [2Fe-2S]-[ferredoxin] + 2 H(+). The protein operates within isoprenoid biosynthesis; dimethylallyl diphosphate biosynthesis; dimethylallyl diphosphate from (2E)-4-hydroxy-3-methylbutenyl diphosphate: step 1/1. It functions in the pathway isoprenoid biosynthesis; isopentenyl diphosphate biosynthesis via DXP pathway; isopentenyl diphosphate from 1-deoxy-D-xylulose 5-phosphate: step 6/6. In terms of biological role, catalyzes the conversion of 1-hydroxy-2-methyl-2-(E)-butenyl 4-diphosphate (HMBPP) into a mixture of isopentenyl diphosphate (IPP) and dimethylallyl diphosphate (DMAPP). Acts in the terminal step of the DOXP/MEP pathway for isoprenoid precursor biosynthesis. In Saccharophagus degradans (strain 2-40 / ATCC 43961 / DSM 17024), this protein is 4-hydroxy-3-methylbut-2-enyl diphosphate reductase.